The sequence spans 856 residues: Inactive rhomboid protein 1 (856 aa).

The interval Met1–Lys21 is disordered. Residues Met1–Thr412 are Cytoplasmic-facing. Ser76 and Ser176 each carry phosphoserine. Phosphothreonine occurs at positions 180 and 183. Ser391 carries the post-translational modification Phosphoserine. Residues Phe413–Phe433 form a helical membrane-spanning segment. Over Ser434–Arg656 the chain is Lumenal. Asn584 carries N-linked (GlcNAc...) asparagine glycosylation. A helical membrane pass occupies residues Leu657–Gln677. Over Met678–Arg692 the chain is Cytoplasmic. The helical transmembrane segment at Ile693–Pro713 threads the bilayer. Residues Tyr714–Arg715 are Lumenal-facing. The helical transmembrane segment at Ala716 to Phe736 threads the bilayer. The Cytoplasmic portion of the chain corresponds to Gln737–Arg747. A helical transmembrane segment spans residues Ala748–Ile768. Residues Asp769 to His773 are Lumenal-facing. A helical membrane pass occupies residues Ile774–Gly794. Over Lys795 to Gln804 the chain is Cytoplasmic. The chain crosses the membrane as a helical span at residues Ile805–Phe825. The Lumenal portion of the chain corresponds to Tyr826–His856.

This sequence belongs to the peptidase S54 family. Homodimer, or homooligomer. Interacts with TGFA and HBEGF. Interacts with EGF; may retain EGF in the endoplasmic reticulum and regulates its degradation through the endoplasmic reticulum-associated degradation (ERAD). Interacts (via cytoplasmic N-terminus) with FRMD8/iTAP; this interaction leads to mutual protein stabilization. Interacts with ADAM17/TACE.

The protein resides in the endoplasmic reticulum membrane. Its subcellular location is the golgi apparatus membrane. Its function is as follows. Regulates ADAM17 protease, a sheddase of the epidermal growth factor (EGF) receptor ligands and TNF, thereby plays a role in sleep, cell survival, proliferation, migration and inflammation. Does not exhibit any protease activity on its own. The protein is Inactive rhomboid protein 1 (RHBDF1) of Bos taurus (Bovine).